The primary structure comprises 68 residues: TxMMSK-03 (68 aa).

The first 19 residues, 1–19 (MSKLGALLIICLLLFPLTA), serve as a signal peptide directing secretion. Residues 20-50 (VPMDGDQPADRPAERMQDDISFEQHPMFDAT) constitute a propeptide that is removed on maturation. 3 disulfides stabilise this stretch: cysteine 53-cysteine 67, cysteine 54-cysteine 63, and cysteine 59-cysteine 66. Residue proline 65 is modified to 4-hydroxyproline; partial.

In terms of processing, contains 3 disulfide bonds. As to expression, expressed by the venom duct. Both hydroxylated and non-hydroxylated forms are mostly and only present in part 2 (proximal of the venom bulb) of the venom duct, respectively.

The protein resides in the secreted. The protein is TxMMSK-03 of Conus textile (Cloth-of-gold cone).